Here is a 106-residue protein sequence, read N- to C-terminus: Large ribosomal subunit protein uL24 (106 aa).

It belongs to the universal ribosomal protein uL24 family. In terms of assembly, part of the 50S ribosomal subunit.

Functionally, one of two assembly initiator proteins, it binds directly to the 5'-end of the 23S rRNA, where it nucleates assembly of the 50S subunit. Its function is as follows. One of the proteins that surrounds the polypeptide exit tunnel on the outside of the subunit. The protein is Large ribosomal subunit protein uL24 of Polaromonas naphthalenivorans (strain CJ2).